A 364-amino-acid polypeptide reads, in one-letter code: Uroporphyrinogen decarboxylase (364 aa).

Residues 28-32 (RQAGR), Phe-47, Asp-78, Tyr-158, Thr-213, and His-334 contribute to the substrate site.

The protein belongs to the uroporphyrinogen decarboxylase family. In terms of assembly, homodimer.

It localises to the cytoplasm. The catalysed reaction is uroporphyrinogen III + 4 H(+) = coproporphyrinogen III + 4 CO2. It functions in the pathway porphyrin-containing compound metabolism; protoporphyrin-IX biosynthesis; coproporphyrinogen-III from 5-aminolevulinate: step 4/4. Catalyzes the decarboxylation of four acetate groups of uroporphyrinogen-III to yield coproporphyrinogen-III. The protein is Uroporphyrinogen decarboxylase of Ralstonia nicotianae (strain ATCC BAA-1114 / GMI1000) (Ralstonia solanacearum).